A 273-amino-acid chain; its full sequence is Glutamate 5-kinase (273 aa).

An ATP-binding site is contributed by K15. 3 residues coordinate substrate: S55, D142, and N158. Residues 178 to 179 and 220 to 226 contribute to the ATP site; these read SD and TGGMLSK.

This sequence belongs to the glutamate 5-kinase family.

The protein localises to the cytoplasm. The enzyme catalyses L-glutamate + ATP = L-glutamyl 5-phosphate + ADP. It functions in the pathway amino-acid biosynthesis; L-proline biosynthesis; L-glutamate 5-semialdehyde from L-glutamate: step 1/2. In terms of biological role, catalyzes the transfer of a phosphate group to glutamate to form L-glutamate 5-phosphate. The polypeptide is Glutamate 5-kinase (Streptococcus pyogenes serotype M3 (strain ATCC BAA-595 / MGAS315)).